Consider the following 192-residue polypeptide: MTEYLLLLVGTVLVNNFVLVKFLGLCPFMGVSKKLETAIGMGLATTFVLTLASVSAYLVETYILTPLGIEYLRTMSFILVIAVVVQFTEMVVHKTSPTLYRLLGIFLPLITTNCAVLGVALLNINENHNFIQSIIYGFGAAVGFSLVLILFAAMRERIAVADVPMPFKGASIAMITAGLMSLAFMGFTGLVK.

The next 6 membrane-spanning stretches (helical) occupy residues 5–25 (LLLL…FLGL), 39–59 (IGMG…AYLV), 63–83 (ILTP…VIAV), 102–122 (LLGI…VALL), 134–154 (IIYG…FAAM), and 171–191 (SIAM…TGLV).

Belongs to the NqrDE/RnfAE family. The complex is composed of six subunits: RnfA, RnfB, RnfC, RnfD, RnfE and RnfG.

Its subcellular location is the cell inner membrane. Part of a membrane-bound complex that couples electron transfer with translocation of ions across the membrane. In Vibrio atlanticus (strain LGP32) (Vibrio splendidus (strain Mel32)), this protein is Ion-translocating oxidoreductase complex subunit A.